We begin with the raw amino-acid sequence, 354 residues long: Dihydroflavonol 4-reductase (354 aa).

NADP(+) contacts are provided by lysine 44 and tyrosine 163.

This sequence belongs to the NAD(P)-dependent epimerase/dehydratase family. Dihydroflavonol-4-reductase subfamily.

It carries out the reaction a (2R,3S,4S)-leucoanthocyanidin + NADP(+) = a (2R,3R)-dihydroflavonol + NADPH + H(+). It catalyses the reaction (2S)-flavan-4-ol + NADP(+) = (2S)-flavanone + NADPH + H(+). Its pathway is pigment biosynthesis; anthocyanin biosynthesis. In terms of biological role, bifunctional enzyme involved in flavonoid metabolism. The polypeptide is Dihydroflavonol 4-reductase (ANT18) (Hordeum vulgare (Barley)).